The chain runs to 277 residues: uncharacterized protein (277 aa).

The segment at 232-262 (NNESAICESQASSKEDERSDKTTSSSKKKSF) is disordered. A compositionally biased stretch (polar residues) spans 234-243 (ESAICESQAS).

The protein resides in the cytoplasm. It localises to the nucleus. This is an uncharacterized protein from Schizosaccharomyces pombe (strain 972 / ATCC 24843) (Fission yeast).